Here is a 459-residue protein sequence, read N- to C-terminus: Cysteine--tRNA ligase (459 aa).

Cysteine 28 is a binding site for Zn(2+). Positions 30–40 (VTVYDLCHIGH) match the 'HIGH' region motif. Positions 209, 234, and 238 each coordinate Zn(2+). The 'KMSKS' region signature appears at 266 to 270 (KMSKS). Residue lysine 269 participates in ATP binding.

Belongs to the class-I aminoacyl-tRNA synthetase family. Monomer. Zn(2+) serves as cofactor.

Its subcellular location is the cytoplasm. The enzyme catalyses tRNA(Cys) + L-cysteine + ATP = L-cysteinyl-tRNA(Cys) + AMP + diphosphate. This chain is Cysteine--tRNA ligase (cysS), found in Haemophilus influenzae (strain ATCC 51907 / DSM 11121 / KW20 / Rd).